The chain runs to 347 residues: GMP reductase (347 aa).

Residue 108-131 coordinates NADP(+); sequence NDFLKLQRILALSPALRFICVDVA. Residues glycine 181 and glycine 183 each coordinate K(+). Cysteine 186 serves as the catalytic Thioimidate intermediate. 216–239 serves as a coordination point for NADP(+); it reads IVGDGGCTCPGDVAKAFGGGADFV.

Belongs to the IMPDH/GMPR family. GuaC type 1 subfamily. Homotetramer.

The catalysed reaction is IMP + NH4(+) + NADP(+) = GMP + NADPH + 2 H(+). Catalyzes the irreversible NADPH-dependent deamination of GMP to IMP. It functions in the conversion of nucleobase, nucleoside and nucleotide derivatives of G to A nucleotides, and in maintaining the intracellular balance of A and G nucleotides. The protein is GMP reductase of Tolumonas auensis (strain DSM 9187 / NBRC 110442 / TA 4).